The chain runs to 338 residues: Legumin B (338 aa).

The disordered stretch occupies residues 16–162 (SLNTKEDTAK…RQHSKGRKNG (147 aa)). A compositionally biased stretch (basic and acidic residues) spans 18 to 44 (NTKEDTAKRLRSPQDERGQIVKVEDGL). 2 stretches are compositionally biased toward acidic residues: residues 82 to 92 (DEDEDEEEEEE) and 136 to 150 (EEEE…EEEE). Residues 174–321 (ENIARPSRGD…AFGLRHSQVA (148 aa)) enclose the Cupin type-1 domain.

This sequence belongs to the 11S seed storage protein (globulins) family. Hexamer; each subunit is composed of an acidic and a basic chain derived from a single precursor and linked by a disulfide bond.

Its function is as follows. This protein found in the seeds of many leguminous and non-leguminous plants is the source of sulfur-containing amino acids in seed meals. This chain is Legumin B (LEGB), found in Pisum sativum (Garden pea).